The chain runs to 235 residues: Iron-sulfur cluster co-chaperone protein HscB (235 aa).

A divalent metal cation is bound by residues Cys41, Cys44, Cys58, and Cys61. One can recognise a J domain in the interval 72-144 (DYFSLMDCNR…LSRGLYLLKL (73 aa)).

Belongs to the HscB family. Interacts with ISCU and HSPA9 to form an iron-sulfur transfer complex. Interacts with SDHAF1 (via the first LYR motif); the interaction recruits the iron-sulfur transfer complex composed of HSC20, HSPA9 and ISCU and mediates the incorporation of iron-sulfur clusters into SDHB which also interacts with HSC20. Interacts with the cytoplasmic form of ISCU and with CIA complex member CIAO1 (via LYR motif). In terms of assembly, homodimer. Interacts with ISCU (cytoplasmic form); this interaction stabilizes the (Fe-S) clusters on ISCU. Interacts with the CIA complex member CIAO1 (via LYR motif). As to expression, expressed in lung, brain, stomach, spleen, ovary, testis, liver, muscle and heart.

The protein resides in the cytoplasm. Its subcellular location is the mitochondrion. The protein operates within cofactor biosynthesis; iron-sulfur cluster biosynthesis. In terms of biological role, acts as a co-chaperone in iron-sulfur cluster assembly in mitochondria. Required for incorporation of iron-sulfur clusters into SDHB, the iron-sulfur protein subunit of succinate dehydrogenase that is involved in complex II of the mitochondrial electron transport chain. Recruited to SDHB by interaction with SDHAF1 which first binds SDHB and then recruits the iron-sulfur transfer complex formed by HSC20, HSPA9 and ISCU through direct binding to HSC20. Plays an essential role in hematopoiesis. Acts as a co-chaperone in iron-sulfur cluster assembly in the cytoplasm. Also mediates complex formation between components of the cytosolic iron-sulfur biogenesis pathway and the CIA targeting complex composed of CIAO1, DIPK1B/FAM69B and MMS19 by binding directly to the scaffold protein ISCU and to CIAO1. This facilitates iron-sulfur cluster insertion into a number of cytoplasmic and nuclear proteins including POLD1, ELP3, DPYD and PPAT. This Homo sapiens (Human) protein is Iron-sulfur cluster co-chaperone protein HscB.